The following is a 765-amino-acid chain: 5-methyltetrahydropteroyltriglutamate--homocysteine methyltransferase (765 aa).

Residues 18–21 (REWK) and K114 contribute to the 5-methyltetrahydropteroyltri-L-glutamate site. L-homocysteine is bound by residues 437 to 439 (IGS) and E490. Residues 437 to 439 (IGS) and E490 each bind L-methionine. Residue W567 participates in 5-methyltetrahydropteroyltri-L-glutamate binding. An L-homocysteine-binding site is contributed by D605. D605 provides a ligand contact to L-methionine. Position 611 (E611) interacts with 5-methyltetrahydropteroyltri-L-glutamate. The Zn(2+) site is built by H647, C649, and E671. The active-site Proton donor is the H700. C732 is a Zn(2+) binding site.

The protein belongs to the vitamin-B12 independent methionine synthase family. Zn(2+) is required as a cofactor.

The catalysed reaction is 5-methyltetrahydropteroyltri-L-glutamate + L-homocysteine = tetrahydropteroyltri-L-glutamate + L-methionine. It participates in amino-acid biosynthesis; L-methionine biosynthesis via de novo pathway; L-methionine from L-homocysteine (MetE route): step 1/1. Its function is as follows. Catalyzes the transfer of a methyl group from 5-methyltetrahydrofolate to homocysteine resulting in methionine formation. The polypeptide is 5-methyltetrahydropteroyltriglutamate--homocysteine methyltransferase (Listeria innocua serovar 6a (strain ATCC BAA-680 / CLIP 11262)).